The primary structure comprises 1218 residues: DNA-directed RNA polymerase subunit beta' (1218 aa).

Residues C60, C62, C75, and C78 each coordinate Zn(2+). Residues D455, D457, and D459 each contribute to the Mg(2+) site. Zn(2+) contacts are provided by C824, C897, C904, and C907. The disordered stretch occupies residues 1195–1218 (ENEAQSDKSQDEQEIGEITVDMGE).

The protein belongs to the RNA polymerase beta' chain family. In terms of assembly, the RNAP catalytic core consists of 2 alpha, 1 beta, 1 beta' and 1 omega subunit. When a sigma factor is associated with the core the holoenzyme is formed, which can initiate transcription. Requires Mg(2+) as cofactor. Zn(2+) is required as a cofactor.

The enzyme catalyses RNA(n) + a ribonucleoside 5'-triphosphate = RNA(n+1) + diphosphate. Functionally, DNA-dependent RNA polymerase catalyzes the transcription of DNA into RNA using the four ribonucleoside triphosphates as substrates. The protein is DNA-directed RNA polymerase subunit beta' of Natranaerobius thermophilus (strain ATCC BAA-1301 / DSM 18059 / JW/NM-WN-LF).